The sequence spans 121 residues: uncharacterized protein (121 aa).

This is an uncharacterized protein from Streptococcus pyogenes serotype M6 (strain ATCC BAA-946 / MGAS10394).